The primary structure comprises 338 residues: GTPase Obg (338 aa).

One can recognise an Obg domain in the interval 1 to 159 (MSFIDEVKIN…RWIRMELKLM (159 aa)). A disordered region spans residues 58–79 (DLRQHPHQKAGRGKNGMGSDRH). Residues 160 to 331 (ADVGLLGMPS…LLDDIAFNLW (172 aa)) form the OBG-type G domain. Residues 166–173 (GMPSVGKS), 191–195 (FTTLK), 213–216 (DIPG), 283–286 (NKID), and 312–314 (SAA) each bind GTP. The Mg(2+) site is built by serine 173 and threonine 193.

This sequence belongs to the TRAFAC class OBG-HflX-like GTPase superfamily. OBG GTPase family. In terms of assembly, monomer. Mg(2+) serves as cofactor.

Its subcellular location is the cytoplasm. In terms of biological role, an essential GTPase which binds GTP, GDP and possibly (p)ppGpp with moderate affinity, with high nucleotide exchange rates and a fairly low GTP hydrolysis rate. Plays a role in control of the cell cycle, stress response, ribosome biogenesis and in those bacteria that undergo differentiation, in morphogenesis control. This is GTPase Obg from Citrifermentans bemidjiense (strain ATCC BAA-1014 / DSM 16622 / JCM 12645 / Bem) (Geobacter bemidjiensis).